We begin with the raw amino-acid sequence, 630 residues long: Phosphatidylinositol 4-kinase gamma 5 (630 aa).

The Ubiquitin-like; degenerate domain maps to 41-98 (RRVFVQTETGCVLGLELDRSDNAHTVKRKLQVALNFPIEESSLTFGDLVLKNDLTAVR). One can recognise a PI3K/PI4K catalytic domain in the interval 162-459 (GIDPVAVNSG…LIGEKDAESP (298 aa)). Residues 168–174 (VNSGLGG) form a G-loop region. Residues 169 to 175 (NSGLGGA), Lys190, and 279 to 282 (QQFI) contribute to the ATP site. Residues 312–320 (LNTDRHSGN) form a catalytic loop region. Residues 339 to 365 (PIDHGLCLPETLEDPYFEWIHWPQASI) are activation loop. Asp341 is a binding site for ATP. The disordered stretch occupies residues 500-527 (LSKVEETTEDGEEEEEEDREEEENDRAD). Residues 506–524 (TTEDGEEEEEEDREEEEND) are compositionally biased toward acidic residues. At Ser571 the chain carries Phosphoserine.

Belongs to the PI3/PI4-kinase family. Type II PI4K subfamily. In terms of assembly, interacts with AHK2.

It carries out the reaction a 1,2-diacyl-sn-glycero-3-phospho-(1D-myo-inositol) + ATP = a 1,2-diacyl-sn-glycero-3-phospho-(1D-myo-inositol 4-phosphate) + ADP + H(+). Its function is as follows. The phosphorylation of phosphatidylinositol (PI) to PI4P is the first committed step in the generation of phosphatidylinositol 4,5-bisphosphate (PIP2), a precursor of the second messenger inositol 1,4,5-trisphosphate (InsP3). This chain is Phosphatidylinositol 4-kinase gamma 5 (PI4KG5), found in Arabidopsis thaliana (Mouse-ear cress).